A 141-amino-acid chain; its full sequence is Hemoglobin subunit alpha-A (141 aa).

The Globin domain maps to 1-141 (VLSGPDKTNV…VGAVLTAKYR (141 aa)). His58 lines the O2 pocket. His87 serves as a coordination point for heme b.

This sequence belongs to the globin family. In terms of assembly, heterotetramer of two alpha chains and two beta chains. Red blood cells.

Functionally, involved in oxygen transport from the lung to the various peripheral tissues. This is Hemoglobin subunit alpha-A (HBAA) from Rhea americana (Greater rhea).